Consider the following 150-residue polypeptide: 1,4-dihydroxy-2-naphthoyl-CoA hydrolase (150 aa).

Residue Asp-22 is part of the active site.

Belongs to the 4-hydroxybenzoyl-CoA thioesterase family. DHNA-CoA hydrolase subfamily.

The catalysed reaction is 1,4-dihydroxy-2-naphthoyl-CoA + H2O = 1,4-dihydroxy-2-naphthoate + CoA + H(+). The protein operates within cofactor biosynthesis; phylloquinone biosynthesis. Its pathway is quinol/quinone metabolism; 1,4-dihydroxy-2-naphthoate biosynthesis; 1,4-dihydroxy-2-naphthoate from chorismate: step 7/7. Its function is as follows. Catalyzes the hydrolysis of 1,4-dihydroxy-2-naphthoyl-CoA (DHNA-CoA) to 1,4-dihydroxy-2-naphthoate (DHNA), a reaction involved in phylloquinone (vitamin K1) biosynthesis. This chain is 1,4-dihydroxy-2-naphthoyl-CoA hydrolase, found in Prochlorococcus marinus (strain NATL1A).